The sequence spans 4588 residues: Protocadherin Fat 1 (4588 aa).

A signal peptide spans 1-21 (MGRHLALLLLLLLLFQHFGDS). Residues 22–4181 (DGSQRLEQTP…STPWNIGLAE (4160 aa)) are Extracellular-facing. Cadherin domains lie at 35–149 (THLE…RPLF) and 150–257 (SPTS…APVI). N-linked (GlcNAc...) asparagine glycosylation occurs at Asn40. Residue Asn333 is glycosylated (N-linked (GlcNAc...) asparagine). Cadherin domains are found at residues 368 to 463 (EKDV…PPEF), 464 to 569 (TQTA…TPLF), 570 to 673 (EKIN…VNLQ), 718 to 822 (STLP…PPEF), 823 to 927 (LQES…PPTF), 928 to 1034 (IPPN…PPVF), 1035 to 1139 (SSFV…APQT), 1140 to 1245 (SEPV…KPQF), 1246 to 1357 (LQKF…EPIS), 1359 to 1456 (EESF…RPQF), 1457 to 1562 (STSK…APWF), 1563 to 1667 (TASS…SPKF), 1668 to 1765 (TSKE…APVF), 1766 to 1879 (MQAE…PPVF), 1880 to 1979 (AKPL…HLKF), 1980 to 2081 (TQDV…APVF), 2082 to 2182 (VNLP…MPVF), 2183 to 2283 (EKPF…PPVF), 2284 to 2390 (AQQS…PPLF), 2391 to 2492 (EQQI…SPAF), 2493 to 2596 (LQNE…APQF), 2597 to 2703 (RATK…LPKF), 2704 to 2809 (SEPF…SPVF), 2810 to 2918 (ESSP…PPRF), 2919 to 3023 (TAEI…SPVC), 3024 to 3125 (EKTL…APEF), 3126 to 3230 (SADP…PPVF), 3231 to 3335 (EYRE…TPVF), 3336 to 3440 (SQDT…APVF), 3441 to 3545 (SRGN…PPAI), and 3546 to 3647 (LPLE…AIRF). 3 N-linked (GlcNAc...) asparagine glycosylation sites follow: Asn660, Asn740, and Asn791. Asn998 carries an N-linked (GlcNAc...) asparagine glycan. 2 N-linked (GlcNAc...) asparagine glycosylation sites follow: Asn1426 and Asn1551. N-linked (GlcNAc...) asparagine glycosylation is found at Asn1748, Asn1864, Asn1902, Asn1940, and Asn1991. N-linked (GlcNAc...) asparagine glycosylation is found at Asn2325 and Asn2464. 6 N-linked (GlcNAc...) asparagine glycosylation sites follow: Asn3324, Asn3422, Asn3444, Asn3613, Asn3640, and Asn3716. An EGF-like 1 domain is found at 3790–3827 (VHHGCEDDPCPEGSECVSDPWEEKHTCVCPSGRFGQCP). Intrachain disulfides connect Cys3794–Cys3805, Cys3799–Cys3816, Cys3818–Cys3826, Cys3976–Cys4009, Cys4017–Cys4028, Cys4022–Cys4038, Cys4040–Cys4049, Cys4056–Cys4067, Cys4061–Cys4076, Cys4078–Cys4087, Cys4093–Cys4104, Cys4098–Cys4113, Cys4115–Cys4124, Cys4131–Cys4142, and Cys4136–Cys4151. The Laminin G-like domain maps to 3829 to 4009 (SSSMTLTGNS…EESVDVSPGC (181 aa)). EGF-like domains lie at 4013–4050 (ATED…THCE), 4052–4088 (SVNP…QRCQ), and 4089–4125 (LSPY…ERCQ). The EGF-like 5; calcium-binding domain occupies 4127–4163 (DIDECSGNPCLHGALCENTHGSYHCNCSHEYRGRHCE). Asn4152 carries an N-linked (GlcNAc...) asparagine glycan. A disulfide bridge links Cys4153 with Cys4162. Residues 4182–4202 (GIGIVVFVAGIFLLVVVFVLC) traverse the membrane as a helical segment. Residues 4203–4588 (RKMISRKKKH…PLDSQQHTEV (386 aa)) lie on the Cytoplasmic side of the membrane. The short motif at 4204-4214 (KMISRKKKHQA) is the Nuclear localization signal element. Disordered stretches follow at residues 4255–4275 (SYTP…SFEG), 4303–4327 (SVAP…QKPS), and 4343–4376 (LSKK…SESC). Residues 4256–4265 (YTPSIPSDSR) show a composition bias toward polar residues. Positions 4363-4374 (SEVQSLSSFQSE) are enriched in polar residues. The PTB-like motif signature appears at 4378-4382 (DNGYH). Disordered regions lie at residues 4435–4479 (FPPP…SSSR) and 4565–4588 (ESGD…HTEV).

As to quaternary structure, interacts (via the C-terminus 4300-4400 AA) with ATN1. Interacts with RERE. Undergoes proteolytic cleavage. The extracellular domain is cleaved off and the cytoplasmic domain (about 400 AA) shuttles to the nucleus. In terms of tissue distribution, expressed in many epithelial and some endothelial and smooth muscle cells.

The protein localises to the cell membrane. It localises to the nucleus. Functionally, plays an essential role for cellular polarization, directed cell migration and modulating cell-cell contact. In Homo sapiens (Human), this protein is Protocadherin Fat 1 (FAT1).